The primary structure comprises 447 residues: Tubulin beta-5 chain (447 aa).

GTP is bound by residues glutamine 11, glutamate 69, serine 138, glycine 142, threonine 143, glycine 144, asparagine 204, and asparagine 226. Glutamate 69 is a Mg(2+) binding site. A disordered region spans residues 421–447 (EYQQYQDATADDEEEDYGDEEEDEVAA). Residues 429-447 (TADDEEEDYGDEEEDEVAA) show a composition bias toward acidic residues.

It belongs to the tubulin family. In terms of assembly, dimer of alpha and beta chains. A typical microtubule is a hollow water-filled tube with an outer diameter of 25 nm and an inner diameter of 15 nM. Alpha-beta heterodimers associate head-to-tail to form protofilaments running lengthwise along the microtubule wall with the beta-tubulin subunit facing the microtubule plus end conferring a structural polarity. Microtubules usually have 13 protofilaments but different protofilament numbers can be found in some organisms and specialized cells. Mg(2+) serves as cofactor. As to expression, expressed in roots, leaf sheaths, and suspension cultured cells.

It localises to the cytoplasm. It is found in the cytoskeleton. Functionally, tubulin is the major constituent of microtubules, a cylinder consisting of laterally associated linear protofilaments composed of alpha- and beta-tubulin heterodimers. Microtubules grow by the addition of GTP-tubulin dimers to the microtubule end, where a stabilizing cap forms. Below the cap, tubulin dimers are in GDP-bound state, owing to GTPase activity of alpha-tubulin. The chain is Tubulin beta-5 chain (TUBB5) from Oryza sativa subsp. japonica (Rice).